A 453-amino-acid chain; its full sequence is Glutamyl-tRNA(Gln) amidotransferase subunit A (453 aa).

Active-site charge relay system residues include Lys-56 and Ser-131. Ser-155 serves as the catalytic Acyl-ester intermediate.

Belongs to the amidase family. GatA subfamily. As to quaternary structure, heterotrimer of A, B and C subunits.

The enzyme catalyses L-glutamyl-tRNA(Gln) + L-glutamine + ATP + H2O = L-glutaminyl-tRNA(Gln) + L-glutamate + ADP + phosphate + H(+). Its function is as follows. Allows the formation of correctly charged Gln-tRNA(Gln) through the transamidation of misacylated Glu-tRNA(Gln) in organisms which lack glutaminyl-tRNA synthetase. The reaction takes place in the presence of glutamine and ATP through an activated gamma-phospho-Glu-tRNA(Gln). This chain is Glutamyl-tRNA(Gln) amidotransferase subunit A, found in Campylobacter jejuni subsp. doylei (strain ATCC BAA-1458 / RM4099 / 269.97).